We begin with the raw amino-acid sequence, 297 residues long: UDP-N-acetylenolpyruvoylglucosamine reductase (297 aa).

Positions 26–191 (KSGGTADWLF…VAARFRGHPG (166 aa)) constitute an FAD-binding PCMH-type domain. Arg-171 is a catalytic residue. Residue Ser-220 is the Proton donor of the active site. Residue Glu-290 is part of the active site.

This sequence belongs to the MurB family. The cofactor is FAD.

It is found in the cytoplasm. It carries out the reaction UDP-N-acetyl-alpha-D-muramate + NADP(+) = UDP-N-acetyl-3-O-(1-carboxyvinyl)-alpha-D-glucosamine + NADPH + H(+). It functions in the pathway cell wall biogenesis; peptidoglycan biosynthesis. In terms of biological role, cell wall formation. In Novosphingobium aromaticivorans (strain ATCC 700278 / DSM 12444 / CCUG 56034 / CIP 105152 / NBRC 16084 / F199), this protein is UDP-N-acetylenolpyruvoylglucosamine reductase.